Reading from the N-terminus, the 463-residue chain is Elongation factor 1-alpha (463 aa).

A tr-type G domain is found at 8 to 245 (KTHLNIVIIG…DALVPPVRPA (238 aa)). Positions 17–24 (GHVDSGKS) are G1. 17–24 (GHVDSGKS) provides a ligand contact to GTP. Residues 73-77 (GITID) are G2. Positions 94–97 (DAPG) are G3. GTP is bound by residues 94-98 (DAPGH) and 156-159 (NKMD). The tract at residues 156 to 159 (NKMD) is G4. Positions 197–199 (SGW) are G5.

This sequence belongs to the TRAFAC class translation factor GTPase superfamily. Classic translation factor GTPase family. EF-Tu/EF-1A subfamily. In terms of assembly, the 42S RNP particle comprises four subunits each of which contains one molecule of 5S RNA, three molecules of tRNA, two molecules of EF1-alpha and one molecule of the 5S RNA binding protein 43.

It is found in the cytoplasm. This protein is one of two protein components of a 42S RNP particle that is very abundant in previtellogenic oocytes. A major function served by 42sp50 appears to be the storage of tRNAs for later use in oogenesis and early embryogenesis. Purified 42S particles can directly transfer aminoacyl tRNA to ribosomes. The chain is Elongation factor 1-alpha from Xenopus laevis (African clawed frog).